The following is a 230-amino-acid chain: 7-cyano-7-deazaguanine synthase (230 aa).

14 to 24 (LSGGLDSTTTL) is a binding site for ATP. 4 residues coordinate Zn(2+): C194, C204, C207, and C210.

Belongs to the QueC family. Zn(2+) is required as a cofactor.

It carries out the reaction 7-carboxy-7-deazaguanine + NH4(+) + ATP = 7-cyano-7-deazaguanine + ADP + phosphate + H2O + H(+). It participates in purine metabolism; 7-cyano-7-deazaguanine biosynthesis. Its function is as follows. Catalyzes the ATP-dependent conversion of 7-carboxy-7-deazaguanine (CDG) to 7-cyano-7-deazaguanine (preQ(0)). This chain is 7-cyano-7-deazaguanine synthase, found in Ruthia magnifica subsp. Calyptogena magnifica.